The primary structure comprises 477 residues: Bifunctional protein HldE (477 aa).

The tract at residues 1 to 318 (MKVNLPAFER…ENAVRGRADT (318 aa)) is ribokinase. ATP is bound at residue 195-198 (NLSE). Asp-264 is a catalytic residue. A cytidylyltransferase region spans residues 344 to 477 (MTNGVFDILH…IKKIQTESEK (134 aa)).

It in the N-terminal section; belongs to the carbohydrate kinase PfkB family. The protein in the C-terminal section; belongs to the cytidylyltransferase family. As to quaternary structure, homodimer.

The catalysed reaction is D-glycero-beta-D-manno-heptose 7-phosphate + ATP = D-glycero-beta-D-manno-heptose 1,7-bisphosphate + ADP + H(+). It carries out the reaction D-glycero-beta-D-manno-heptose 1-phosphate + ATP + H(+) = ADP-D-glycero-beta-D-manno-heptose + diphosphate. The protein operates within nucleotide-sugar biosynthesis; ADP-L-glycero-beta-D-manno-heptose biosynthesis; ADP-L-glycero-beta-D-manno-heptose from D-glycero-beta-D-manno-heptose 7-phosphate: step 1/4. It participates in nucleotide-sugar biosynthesis; ADP-L-glycero-beta-D-manno-heptose biosynthesis; ADP-L-glycero-beta-D-manno-heptose from D-glycero-beta-D-manno-heptose 7-phosphate: step 3/4. Catalyzes the phosphorylation of D-glycero-D-manno-heptose 7-phosphate at the C-1 position to selectively form D-glycero-beta-D-manno-heptose-1,7-bisphosphate. Functionally, catalyzes the ADP transfer from ATP to D-glycero-beta-D-manno-heptose 1-phosphate, yielding ADP-D-glycero-beta-D-manno-heptose. This chain is Bifunctional protein HldE, found in Salmonella dublin (strain CT_02021853).